The following is a 129-amino-acid chain: Glycine cleavage system H protein (129 aa).

In terms of domain architecture, Lipoyl-binding spans 24 to 106 (SYTVGITEHA…YGEGWFFRVM (83 aa)). N6-lipoyllysine is present on Lys65.

This sequence belongs to the GcvH family. As to quaternary structure, the glycine cleavage system is composed of four proteins: P, T, L and H. The cofactor is (R)-lipoate.

In terms of biological role, the glycine cleavage system catalyzes the degradation of glycine. The H protein shuttles the methylamine group of glycine from the P protein to the T protein. The sequence is that of Glycine cleavage system H protein from Shewanella oneidensis (strain ATCC 700550 / JCM 31522 / CIP 106686 / LMG 19005 / NCIMB 14063 / MR-1).